A 221-amino-acid chain; its full sequence is Iron-sulfur cluster repair protein YtfE (221 aa).

The protein belongs to the RIC family. YtfE subfamily. In terms of assembly, homodimer.

Its subcellular location is the cytoplasm. In terms of biological role, di-iron-containing protein involved in the repair of iron-sulfur clusters damaged by oxidative and nitrosative stress conditions. The sequence is that of Iron-sulfur cluster repair protein YtfE from Pectobacterium atrosepticum (strain SCRI 1043 / ATCC BAA-672) (Erwinia carotovora subsp. atroseptica).